Here is a 287-residue protein sequence, read N- to C-terminus: uncharacterized protein (287 aa).

The tract at residues 1–23 (MTVSDSPAQRQTPPQTPGGTAPR) is disordered. A compositionally biased stretch (low complexity) spans 7–23 (PAQRQTPPQTPGGTAPR). Mg(2+) contacts are provided by Asp-31, Asp-33, and Asp-204.

This sequence belongs to the HAD-like hydrolase superfamily. SerB family.

This is an uncharacterized protein from Mycobacterium tuberculosis (strain CDC 1551 / Oshkosh).